Here is a 217-residue protein sequence, read N- to C-terminus: Superoxide dismutase [Cu-Zn], chloroplastic (217 aa).

The transit peptide at 1-63 directs the protein to the chloroplast; it reads MAAHSIFTTT…TTPKPLTVFA (63 aa). Cu cation-binding residues include H109, H111, and H126. Cysteines 120 and 209 form a disulfide. Zn(2+) contacts are provided by H126, H134, H143, and D146. Position 183 (H183) interacts with Cu cation.

The protein belongs to the Cu-Zn superoxide dismutase family. Homotetramer. Cu cation serves as cofactor. The cofactor is Zn(2+).

The protein resides in the plastid. Its subcellular location is the chloroplast. It catalyses the reaction 2 superoxide + 2 H(+) = H2O2 + O2. Functionally, destroys radicals which are normally produced within the cells and which are toxic to biological systems. The protein is Superoxide dismutase [Cu-Zn], chloroplastic (SODCP.2) of Solanum lycopersicum (Tomato).